The primary structure comprises 139 residues: D-ribose pyranase (139 aa).

His-20 (proton donor) is an active-site residue. Residues Asp-28, His-106, and 128-130 (YAN) contribute to the substrate site.

This sequence belongs to the RbsD / FucU family. RbsD subfamily. In terms of assembly, homodecamer.

The protein localises to the cytoplasm. It catalyses the reaction beta-D-ribopyranose = beta-D-ribofuranose. It participates in carbohydrate metabolism; D-ribose degradation; D-ribose 5-phosphate from beta-D-ribopyranose: step 1/2. Functionally, catalyzes the interconversion of beta-pyran and beta-furan forms of D-ribose. The polypeptide is D-ribose pyranase (Cronobacter sakazakii (strain ATCC BAA-894) (Enterobacter sakazakii)).